The following is a 427-amino-acid chain: MGSVRTNRYSIVSSEEDGMKLATLAVANGFGNGKSKVHTRQQCRSRFVKKDGHCNVQFINVGEKGQRYLADIFTTCVDIRWRWMLVIFCLAFVLSWLFFGCVFWLIALLHGDLDASKESKACVSEVNSFTAAFLFSIETQTTIGYGFRCVTDECPVAVFMVVFQSIVGCIIDAFIIGAVMAKMAKPKKRNETLVFSHNAVIAMRDGKLCLMWRVGNLRKSHLVEAHVRAQLLKSRITSEGEYIPLDQIDINVGFDSGIDRIFLVSPITIVHEIDEDSPLYDLSKQDIDNADFEIVVILEGMVEATAMTTQCRSSYLANEILWGHRYEPVLFEEKHYYKVDYSRFHKTYEVPNTPLCSARDLAEKKYILSNANSFCYENEVALTSKEEDDSENGVPESTSTDTPPDIDLHNQASVPLEPRPLRRESEI.

Over 1 to 81 the chain is Cytoplasmic; it reads MGSVRTNRYS…IFTTCVDIRW (81 aa). Cysteine 76 is modified (S-nitrosocysteine). Residues 82–106 form a helical membrane-spanning segment; it reads RWMLVIFCLAFVLSWLFFGCVFWLI. Residues 107–128 lie on the Extracellular side of the membrane; sequence ALLHGDLDASKESKACVSEVNS. Positions 129–140 form an intramembrane region, helical; Pore-forming; the sequence is FTAAFLFSIETQ. Positions 141 to 147 form an intramembrane region, pore-forming; the sequence is TTIGYGF. The Selectivity filter motif lies at 142-147; it reads TIGYGF. The Extracellular segment spans residues 148–156; the sequence is RCVTDECPV. The chain crosses the membrane as a helical span at residues 157 to 178; that stretch reads AVFMVVFQSIVGCIIDAFIIGA. Residues 179 to 427 are Cytoplasmic-facing; sequence VMAKMAKPKK…PRPLRRESEI (249 aa). Residues 181–208 are polyphosphoinositide (PIP2)-binding; that stretch reads AKMAKPKKRNETLVFSHNAVIAMRDGKL. Residues 384–427 form a disordered region; the sequence is SKEEDDSENGVPESTSTDTPPDIDLHNQASVPLEPRPLRRESEI. The short motif at 425–427 is the PDZ-binding element; it reads SEI.

It belongs to the inward rectifier-type potassium channel (TC 1.A.2.1) family. KCNJ2 subfamily. Homotetramer. Homomultimeric and heteromultimeric association with KCNJ4/Kir2.3. Can form heteromeric channels with Kir2.6/KCNJ18. Associates, via its PDZ-recognition domain, with a complex containing LIN7A, LIN7B, LIN7C, DLG1, CASK and APBA1. Post-translationally, S-nitrosylation increases the open probability and inward rectifying currents.

The protein resides in the cell membrane. It is found in the sarcolemma. The protein localises to the T-tubule. It carries out the reaction K(+)(in) = K(+)(out). With respect to regulation, activated by phosphatidylinositol 4,5 biphosphate (PtdIns(4,5)P2). In terms of biological role, inward rectifier potassium channels are characterized by a greater tendency to allow potassium to flow into the cell rather than out of it. Their voltage dependence is regulated by the concentration of extracellular potassium; as external potassium is raised, the voltage range of the channel opening shifts to more positive voltages. The inward rectification is mainly due to the blockage of outward current by internal magnesium. Can be blocked by extracellular barium and cesium. Probably participates in establishing action potential waveform and excitability of neuronal and muscle tissues. The sequence is that of Inward rectifier potassium channel 2 (KCNJ2) from Bos taurus (Bovine).